A 396-amino-acid chain; its full sequence is Elongation factor Tu (396 aa).

Residues 10–206 (KPHCNIGTIG…AVDAYIPQPE (197 aa)) enclose the tr-type G domain. Positions 19-26 (GHVDHGKT) are G1. Residue 19–26 (GHVDHGKT) coordinates GTP. Thr26 serves as a coordination point for Mg(2+). The interval 60-64 (GITIS) is G2. The G3 stretch occupies residues 81–84 (DCPG). GTP contacts are provided by residues 81-85 (DCPGH) and 136-139 (NKVD). The interval 136–139 (NKVD) is G4. A G5 region spans residues 174-176 (SAL).

This sequence belongs to the TRAFAC class translation factor GTPase superfamily. Classic translation factor GTPase family. EF-Tu/EF-1A subfamily. Monomer.

It localises to the cytoplasm. It carries out the reaction GTP + H2O = GDP + phosphate + H(+). In terms of biological role, GTP hydrolase that promotes the GTP-dependent binding of aminoacyl-tRNA to the A-site of ribosomes during protein biosynthesis. This Parvibaculum lavamentivorans (strain DS-1 / DSM 13023 / NCIMB 13966) protein is Elongation factor Tu.